Consider the following 436-residue polypeptide: Trigger factor (436 aa).

The PPIase FKBP-type domain maps to 163–248 (GDTVVIDFDG…IHEVKEKQLP (86 aa)).

The protein belongs to the FKBP-type PPIase family. Tig subfamily.

It is found in the cytoplasm. The enzyme catalyses [protein]-peptidylproline (omega=180) = [protein]-peptidylproline (omega=0). In terms of biological role, involved in protein export. Acts as a chaperone by maintaining the newly synthesized protein in an open conformation. Functions as a peptidyl-prolyl cis-trans isomerase. The polypeptide is Trigger factor (Levilactobacillus brevis (strain ATCC 367 / BCRC 12310 / CIP 105137 / JCM 1170 / LMG 11437 / NCIMB 947 / NCTC 947) (Lactobacillus brevis)).